We begin with the raw amino-acid sequence, 184 residues long: Cysteine-rich atrial secretory protein (184 aa).

An N-terminal signal peptide occupies residues 1–26 (MATFQAHFFAAVMCVGVLGLSKLCGA). 5 cysteine pairs are disulfide-bonded: C29–C34, C65–C111, C75–C82, C123–C155, and C135–C144. N74 carries N-linked (GlcNAc...) asparagine glycosylation.

N-glycosylated. In terms of tissue distribution, highly expressed in atrium. Moderately expressed in the pericardium, pulmonary vein, nephridium, arteria anterior, ovotestis and connective tissue. Low expression found in intestine, lung plexus, diaphragm, subesophageal ganglion, ventricle and digestive gland. Very low expression found in columellar retractor, pedal nerves and cerebral ganglion. Not expressed in hemocytes.

It localises to the secreted. The polypeptide is Cysteine-rich atrial secretory protein (Achatina achatina (Giant Ghana snail)).